Here is a 537-residue protein sequence, read N- to C-terminus: 2-isopropylmalate synthase (537 aa).

The region spanning 8–269 (VLIFDTTLRD…YFNGYLGRAE (262 aa)) is the Pyruvate carboxyltransferase domain. The Mn(2+) site is built by D17, H208, H210, and N244. The regulatory domain stretch occupies residues 408–537 (QLAGVQVSCG…QRAPLPAPAL (130 aa)).

The protein belongs to the alpha-IPM synthase/homocitrate synthase family. LeuA type 1 subfamily. In terms of assembly, homodimer. Mn(2+) is required as a cofactor.

It localises to the cytoplasm. It catalyses the reaction 3-methyl-2-oxobutanoate + acetyl-CoA + H2O = (2S)-2-isopropylmalate + CoA + H(+). It functions in the pathway amino-acid biosynthesis; L-leucine biosynthesis; L-leucine from 3-methyl-2-oxobutanoate: step 1/4. Functionally, catalyzes the condensation of the acetyl group of acetyl-CoA with 3-methyl-2-oxobutanoate (2-ketoisovalerate) to form 3-carboxy-3-hydroxy-4-methylpentanoate (2-isopropylmalate). This Synechococcus sp. (strain RCC307) protein is 2-isopropylmalate synthase.